The following is a 214-amino-acid chain: Protein verrocchio (214 aa).

Probably homomultimerizes. Component of the MTV complex, composed of moi/modigliani, tea and ver/verrocchio. Interacts with moi/modigliani and tea (via C-terminus); the interactions are direct and require fully intact moi/modigliani and ver/verrocchio. The MTV complex is recruited to telomeres by the HipHop-HOAP complex, consisting of HipHop, cav/HOAP and Su(var)205/HP1 to form the terminin telomere-capping complex. Interacts with cav/HOAP; the interaction is direct. Interacts with Su(var)205/HP1; the interaction is indirect and probably requires cav/HOAP or moi/modigliani. Probably interacts with peo (via N-terminus and UBC domain).

It localises to the nucleus. It is found in the chromosome. The protein localises to the telomere. Its function is as follows. Part of the MTV complex that associates with the HipHop-HOAP complex to form the terminin telomere-capping complex involved in telomere maintenance and prevention of telomere fusion. As part of the MTV complex binds single stranded DNA in a sequence-independent manner, protecting it from degradation. The protein is Protein verrocchio of Drosophila melanogaster (Fruit fly).